The following is a 630-amino-acid chain: Long-chain-fatty-acid--AMP ligase FadD32 (630 aa).

Residues 187–192, serine 342, alanine 346, aspartate 469, and arginine 483 each bind ATP; that span reads TSGSTR.

The protein belongs to the ATP-dependent AMP-binding enzyme family. Monomer.

It catalyses the reaction a long-chain fatty acid + holo-[ACP] + ATP = a long-chain fatty acyl-[ACP] + AMP + diphosphate. The catalysed reaction is decanoate + ATP + H(+) = decanoyl-AMP + diphosphate. It carries out the reaction dodecanoate + ATP + H(+) = dodecanoyl-AMP + diphosphate. The enzyme catalyses tetradecanoate + ATP + H(+) = tetradecanoyl-AMP + diphosphate. It functions in the pathway lipid metabolism; mycolic acid biosynthesis. Its activity is regulated as follows. The acyl-AMP ligase activity is inhibited by the alkylphosphate ester of AMP, adenosine 50-dodecylphosphate (AMPC12). Also inhibited by eicosyl-AMP (AMPC20). Its function is as follows. Involved in the biosynthesis of mycolic acids. Catalyzes the activation of long-chain fatty acids as acyl-adenylates (acyl-AMP), which are then transferred to the phosphopantetheine arm of the polyketide synthase Pks13 for further chain extension. Can use decanoate (C10), dodecanoate (C12) and tetradecanoate (C14). This chain is Long-chain-fatty-acid--AMP ligase FadD32, found in Mycolicibacterium smegmatis (strain ATCC 700084 / mc(2)155) (Mycobacterium smegmatis).